Here is an 849-residue protein sequence, read N- to C-terminus: Trehalose-phosphatase (849 aa).

The interval 1–558 (MPSGAQGNTQ…VKALESHMTT (558 aa)) is glycosyltransferase.

It in the N-terminal section; belongs to the glycosyltransferase 20 family. In the C-terminal section; belongs to the trehalose phosphatase family. The cofactor is Mg(2+).

The protein localises to the cytoplasm. The protein resides in the nucleus. It carries out the reaction alpha,alpha-trehalose 6-phosphate + H2O = alpha,alpha-trehalose + phosphate. Its pathway is carbohydrate biosynthesis. Functionally, phosphatase catalytic subunit of the trehalose synthase complex that catalyzes the production of trehalose from glucose-6-phosphate and UDP-glucose in a two step process. This chain is Trehalose-phosphatase (tps2), found in Schizosaccharomyces pombe (strain 972 / ATCC 24843) (Fission yeast).